The following is a 729-amino-acid chain: Heterogeneous nuclear ribonucleoprotein M (729 aa).

Low complexity predominate over residues 1–13 (MAAGVEAAAEVAA). The segment at 1 to 65 (MAAGVEAAAE…GGNRFEPYSN (65 aa)) is disordered. The residue at position 2 (Ala-2) is an N-acetylalanine. A Glycyl lysine isopeptide (Lys-Gly) (interchain with G-Cter in SUMO2) cross-link involves residue Lys-17. Ser-29 bears the Phosphoserine mark. Residues Lys-37, Lys-68, and Lys-82 each participate in a glycyl lysine isopeptide (Lys-Gly) (interchain with G-Cter in SUMO2) cross-link. The span at 37-49 (KGEERPTQNEKRK) shows a compositional bias: basic and acidic residues. RRM domains lie at 70–148 (YRAF…EDPD) and 203–280 (STVF…MDER). Phosphoserine is present on Ser-85. Glycyl lysine isopeptide (Lys-Gly) (interchain with G-Cter in SUMO2) cross-links involve residues Lys-87 and Lys-126. Lys-133 bears the N6-acetyllysine; alternate mark. A Glycyl lysine isopeptide (Lys-Gly) (interchain with G-Cter in SUMO2); alternate cross-link involves residue Lys-133. Glycyl lysine isopeptide (Lys-Gly) (interchain with G-Cter in SUMO2) cross-links involve residues Lys-142 and Lys-144. A Phosphoserine modification is found at Ser-203. Lys-220 participates in a covalent cross-link: Glycyl lysine isopeptide (Lys-Gly) (interchain with G-Cter in SUMO2). Residue Lys-276 is modified to N6-acetyllysine; alternate. Lys-276 is covalently cross-linked (Glycyl lysine isopeptide (Lys-Gly) (interchain with G-Cter in SUMO2); alternate). Residues Lys-284 and Lys-344 each participate in a glycyl lysine isopeptide (Lys-Gly) (interchain with G-Cter in SUMO2) cross-link. Phosphoserine is present on residues Ser-364 and Ser-376. Residues Lys-380 and Lys-387 each participate in a glycyl lysine isopeptide (Lys-Gly) (interchain with G-Cter in SUMO2) cross-link. Ser-396 carries the post-translational modification Phosphoserine. 4 repeat units span residues 399-404 (GIERMG), 406-411 (GIDRIS), 414-419 (GMERMG), and 425-430 (GMDRVG). The interval 399-607 (GIERMGPGID…ALGAGIERMG (209 aa)) is 27 X 6 AA repeats of [GEVSTPAN]-[ILMV]-[DE]-[RH]-[MLVI]-[GAV]. Ser-431 is subject to Phosphoserine. Tandem repeats lie at residues 432 to 437 (EIERMG), 439 to 444 (VMDRMG), and 445 to 450 (SVERMG). At Ser-451 the chain carries Phosphoserine. Repeat copies occupy residues 452-457 (SIERMG), 460-465 (GLDHMA), 467-472 (SIERMG), and 474-479 (TMERIG). Residue Ser-467 is modified to Phosphoserine. Residue Ser-480 is modified to Phosphoserine. 16 tandem repeats follow at residues 481 to 486 (GVERMG), 492 to 497 (GLERMA), 499 to 504 (PIDRVG), 506 to 511 (TIERMG), 513 to 518 (GVERMG), 520 to 525 (AIERMG), 527 to 532 (SMDRMV), 539 to 544 (SLERMG), 546 to 551 (VMDRMA), 553 to 558 (GLERMG), 561 to 566 (NLERMG), 567 to 571 (LERMG), 574 to 579 (SLERMG), 580 to 584 (LERMG), 587 to 592 (SLERMG), and 602 to 607 (GIERMG). Omega-N-methylarginine is present on Arg-495. Ser-527 bears the Phosphoserine mark. Ser-574 is subject to Phosphoserine. A Phosphoserine modification is found at Ser-587. A phosphoserine mark is found at Ser-617, Ser-632, and Ser-636. Residue Lys-650 forms a Glycyl lysine isopeptide (Lys-Gly) (interchain with G-Cter in SUMO2) linkage. In terms of domain architecture, RRM 3 spans 652 to 728 (CQIFVRNLPF…REIDVRIDRN (77 aa)). Thr-664 is modified (phosphothreonine). A Glycyl lysine isopeptide (Lys-Gly) (interchain with G-Cter in SUMO2) cross-link involves residue Lys-666. Lys-671 carries the post-translational modification N6-acetyllysine. Glycyl lysine isopeptide (Lys-Gly) (interchain with G-Cter in SUMO2) cross-links involve residues Lys-684 and Lys-691. Position 697 is an N6-acetyllysine; alternate (Lys-697). Residue Lys-697 forms a Glycyl lysine isopeptide (Lys-Gly) (interchain with G-Cter in SUMO2); alternate linkage. Lys-697 participates in a covalent cross-link: Glycyl lysine isopeptide (Lys-Gly) (interchain with G-Cter in SUMO1); alternate. Ser-700 is modified (phosphoserine). Lys-715 is covalently cross-linked (Glycyl lysine isopeptide (Lys-Gly) (interchain with G-Cter in SUMO2)).

Identified in the spliceosome C complex. Interacts with PPIA/CYPA. Post-translationally, sumoylated.

Its subcellular location is the nucleus. In terms of biological role, pre-mRNA binding protein in vivo, binds avidly to poly(G) and poly(U) RNA homopolymers in vitro. Involved in splicing. Acts as a receptor for carcinoembryonic antigen in Kupffer cells, may initiate a series of signaling events leading to tyrosine phosphorylation of proteins and induction of IL-1 alpha, IL-6, IL-10 and tumor necrosis factor alpha cytokines. The chain is Heterogeneous nuclear ribonucleoprotein M (Hnrnpm) from Mus musculus (Mouse).